A 351-amino-acid polypeptide reads, in one-letter code: Porphobilinogen deaminase (351 aa).

Residue Cys-242 is modified to S-(dipyrrolylmethanemethyl)cysteine.

It belongs to the HMBS family. In terms of assembly, monomer. Dipyrromethane is required as a cofactor.

The catalysed reaction is 4 porphobilinogen + H2O = hydroxymethylbilane + 4 NH4(+). It functions in the pathway porphyrin-containing compound metabolism; protoporphyrin-IX biosynthesis; coproporphyrinogen-III from 5-aminolevulinate: step 2/4. Its function is as follows. Tetrapolymerization of the monopyrrole PBG into the hydroxymethylbilane pre-uroporphyrinogen in several discrete steps. The sequence is that of Porphobilinogen deaminase from Rickettsia rickettsii (strain Sheila Smith).